The following is a 631-amino-acid chain: tRNA uridine 5-carboxymethylaminomethyl modification enzyme MnmG (631 aa).

FAD is bound by residues 13–18 (GGGHAG), V125, and S180. Residue 273-287 (GPRYCPSIEDKVMRF) coordinates NAD(+). Q370 serves as a coordination point for FAD.

This sequence belongs to the MnmG family. As to quaternary structure, homodimer. Heterotetramer of two MnmE and two MnmG subunits. The cofactor is FAD.

The protein localises to the cytoplasm. In terms of biological role, NAD-binding protein involved in the addition of a carboxymethylaminomethyl (cmnm) group at the wobble position (U34) of certain tRNAs, forming tRNA-cmnm(5)s(2)U34. The polypeptide is tRNA uridine 5-carboxymethylaminomethyl modification enzyme MnmG (Vibrio parahaemolyticus serotype O3:K6 (strain RIMD 2210633)).